Here is a 391-residue protein sequence, read N- to C-terminus: Nucleosome assembly protein 1-like 1 (391 aa).

Positions 1 to 10 (MADIDNKEQS) are enriched in basic and acidic residues. Residues 1-32 (MADIDNKEQSELDQDLEDVEEVEEEETGEETK) are disordered. The residue at position 2 (A2) is an N-acetylalanine. A Phosphoserine modification is found at S10. Acidic residues predominate over residues 11-28 (ELDQDLEDVEEVEEEETG). A phosphothreonine mark is found at T62 and T64. S69 is subject to Phosphoserine. K116 carries the N6-acetyllysine modification. The NAP1L motif motif lies at 125 to 150 (YEPTEEECEWKPDEEDEVSEELKEKA). Acidic residues predominate over residues 131–143 (ECEWKPDEEDEVS). Residues 131 to 163 (ECEWKPDEEDEVSEELKEKAKIEDEKKDEEKED) form a disordered region. A Phosphoserine modification is found at S143. Residues 144–163 (EELKEKAKIEDEKKDEEKED) are compositionally biased toward basic and acidic residues. The Nuclear localization signal motif lies at 273–279 (IKKKQKH). Positions 346–376 (AIEDDDDDYDEEGEEADEEGEEEGDEENDPD) are enriched in acidic residues. Residues 346–391 (AIEDDDDDYDEEGEEADEEGEEEGDEENDPDYDPKKDQNPAECKQQ) are disordered. 5-glutamyl polyglycine is present on residues E359 and E360. The span at 377–391 (YDPKKDQNPAECKQQ) shows a compositional bias: basic and acidic residues. C388 bears the Cysteine methyl ester mark. The S-farnesyl cysteine moiety is linked to residue C388. The propeptide at 389–391 (KQQ) is removed in mature form.

This sequence belongs to the nucleosome assembly protein (NAP) family. In terms of assembly, homodimer. The dimer binds strongly and sequentially to single and double H2A-H2B heterodimers. Interacts with ERCC6; this interaction increases ERCC6 processivity. Interacts with RAD54. Interacts with SETD1A. In terms of processing, polyglycylated by TTLL10 on glutamate residues, resulting in polyglycine chains on the gamma-carboxyl group. Both polyglutamylation and polyglycylation modifications can coexist on the same protein on adjacent residues, and lowering polyglycylation levels increases polyglutamylation, and reciprocally. Post-translationally, polyglutamylated by TTLL4 on glutamate residues, resulting in polyglutamate chains on the gamma-carboxyl group. Both polyglutamylation and polyglycylation modifications can coexist on the same protein on adjacent residues, and lowering polyglycylation levels increases polyglutamylation, and reciprocally. Highly expressed in the brain (at protein level). High expression in cerebral cortex, not in cerebellar cortex.

It localises to the nucleus. Its subcellular location is the cytoplasm. It is found in the melanosome. Its function is as follows. Histone chaperone that plays a role in the nuclear import of H2A-H2B and nucleosome assembly. Also participates in several important DNA repair mechanisms: greatly enhances ERCC6-mediated chromatin remodeling which is essential for transcription-coupled nucleotide excision DNA repair. Also stimulates homologous recombination (HR) by RAD51 and RAD54 which is essential in mitotic DNA double strand break (DSB) repair. Plays a key role in the regulation of embryonic neurogenesis. Promotes the proliferation of neural progenitors and inhibits neuronal differentiation during cortical development. Regulates neurogenesis via the modulation of RASSF10; regulates RASSF10 expression by promoting SETD1A-mediated H3K4 methylation at the RASSF10 promoter. This Mus musculus (Mouse) protein is Nucleosome assembly protein 1-like 1 (Nap1l1).